Here is a 447-residue protein sequence, read N- to C-terminus: Polyamine export protein (447 aa).

The Cytoplasmic portion of the chain corresponds to 1–4; sequence MLNS. A CNNM transmembrane domain is found at 1 to 197; sequence MLNSILVILC…ALAGVLRKQE (197 aa). A helical membrane pass occupies residues 5 to 25; the sequence is ILVILCLIAVSAFFSMSEISL. At 26 to 54 the chain is on the periplasmic side; it reads AASRKIKLKLLADEGNINAQRVLNMQENP. Residues 55–75 form a helical membrane-spanning segment; that stretch reads GMFFTVVQIGLNAVAILGGIV. The Cytoplasmic segment spans residues 76–99; sequence GDAAFSPAFHSLFSRYMSAELSEQ. A helical transmembrane segment spans residues 100–120; the sequence is LSFILSFSLVTGMFILFADLT. Over 121–141 the chain is Periplasmic; the sequence is PKRIGMIAPEAVALRIINPMR. Residues 142 to 162 traverse the membrane as a helical segment; the sequence is FCLYVCTPLVWFFNGLANIIF. The Cytoplasmic segment spans residues 163 to 447; sequence RIFKLPMVRK…DAKDKEESVA (285 aa). CBS domains lie at 216–275 and 282–343; these read MTPR…NQSL and QIRN…GLEE.

It belongs to the UPF0053 family. PaeA subfamily.

Its subcellular location is the cell inner membrane. Involved in cadaverine and putrescine tolerance in stationary phase. May facilitate the efflux of both cadaverine and putrescine from the cytoplasm, reducing potentially toxic levels under certain stress conditions. This Escherichia coli O157:H7 protein is Polyamine export protein.